The primary structure comprises 357 residues: 4-hydroxy-3-methylbut-2-en-1-yl diphosphate synthase (flavodoxin) (357 aa).

Residues Cys-264, Cys-267, Cys-299, and Glu-306 each coordinate [4Fe-4S] cluster.

The protein belongs to the IspG family. The cofactor is [4Fe-4S] cluster.

It carries out the reaction (2E)-4-hydroxy-3-methylbut-2-enyl diphosphate + oxidized [flavodoxin] + H2O + 2 H(+) = 2-C-methyl-D-erythritol 2,4-cyclic diphosphate + reduced [flavodoxin]. The protein operates within isoprenoid biosynthesis; isopentenyl diphosphate biosynthesis via DXP pathway; isopentenyl diphosphate from 1-deoxy-D-xylulose 5-phosphate: step 5/6. Its function is as follows. Converts 2C-methyl-D-erythritol 2,4-cyclodiphosphate (ME-2,4cPP) into 1-hydroxy-2-methyl-2-(E)-butenyl 4-diphosphate. This chain is 4-hydroxy-3-methylbut-2-en-1-yl diphosphate synthase (flavodoxin), found in Campylobacter jejuni (strain RM1221).